A 427-amino-acid polypeptide reads, in one-letter code: Glutamate-1-semialdehyde 2,1-aminomutase (427 aa).

Lys-265 is modified (N6-(pyridoxal phosphate)lysine).

Belongs to the class-III pyridoxal-phosphate-dependent aminotransferase family. HemL subfamily. Homodimer. Requires pyridoxal 5'-phosphate as cofactor.

It localises to the cytoplasm. The catalysed reaction is (S)-4-amino-5-oxopentanoate = 5-aminolevulinate. It participates in porphyrin-containing compound metabolism; protoporphyrin-IX biosynthesis; 5-aminolevulinate from L-glutamyl-tRNA(Glu): step 2/2. In Pseudomonas putida (strain ATCC 47054 / DSM 6125 / CFBP 8728 / NCIMB 11950 / KT2440), this protein is Glutamate-1-semialdehyde 2,1-aminomutase.